The primary structure comprises 296 residues: Large ribosomal subunit protein uL29m (296 aa).

A mitochondrion-targeting transit peptide spans 1–19; the sequence is MSITSIRALLRSAVSLART.

Belongs to the universal ribosomal protein uL29 family. As to quaternary structure, component of the mitochondrial large ribosomal subunit. Mature mitochondrial ribosomes consist of a small (37S) and a large (54S) subunit. The 37S subunit contains at least 33 different proteins and 1 molecule of RNA (15S). The 54S subunit contains at least 45 different proteins and 1 molecule of RNA (21S).

The protein resides in the mitochondrion. The chain is Large ribosomal subunit protein uL29m (MRPL4) from Lodderomyces elongisporus (strain ATCC 11503 / CBS 2605 / JCM 1781 / NBRC 1676 / NRRL YB-4239) (Yeast).